Here is a 464-residue protein sequence, read N- to C-terminus: tRNA-2-methylthio-N(6)-dimethylallyladenosine synthase (464 aa).

In terms of domain architecture, MTTase N-terminal spans 19 to 135; that stretch reads GSYWITTFGC…LENLLGKVDL (117 aa). [4Fe-4S] cluster contacts are provided by Cys-28, Cys-64, Cys-98, Cys-170, Cys-174, and Cys-177. The region spanning 156–394 is the Radical SAM core domain; that stretch reads RESSICGWVN…DLVEKTARSR (239 aa). Residues 396-464 enclose the TRAM domain; it reads KRYINNIESV…PFSLTGELYL (69 aa).

This sequence belongs to the methylthiotransferase family. MiaB subfamily. As to quaternary structure, monomer. [4Fe-4S] cluster serves as cofactor.

Its subcellular location is the cytoplasm. It catalyses the reaction N(6)-dimethylallyladenosine(37) in tRNA + (sulfur carrier)-SH + AH2 + 2 S-adenosyl-L-methionine = 2-methylsulfanyl-N(6)-dimethylallyladenosine(37) in tRNA + (sulfur carrier)-H + 5'-deoxyadenosine + L-methionine + A + S-adenosyl-L-homocysteine + 2 H(+). Functionally, catalyzes the methylthiolation of N6-(dimethylallyl)adenosine (i(6)A), leading to the formation of 2-methylthio-N6-(dimethylallyl)adenosine (ms(2)i(6)A) at position 37 in tRNAs that read codons beginning with uridine. This Prochlorococcus marinus (strain AS9601) protein is tRNA-2-methylthio-N(6)-dimethylallyladenosine synthase.